The sequence spans 293 residues: Eukaryotic translation initiation factor 3 subunit G (293 aa).

Disordered stretches follow at residues 1–32 (MPSIEFDDSKPSWADQVEEEGDEGSLPSPKET) and 163–206 (STGE…QPNR). Residues 194–206 (GGTRRGESMQPNR) show a composition bias toward basic and acidic residues. Residues 212 to 290 (ATIRVTNLSE…LILNVEWAKP (79 aa)) form the RRM domain.

It belongs to the eIF-3 subunit G family. Component of the eukaryotic translation initiation factor 3 (eIF-3) complex, which is composed of 13 subunits: eif3a, eif3b, eif3c, eif3d, eif3e, eif3f, eif3g, eif3h, eif3i, eif3j, eif3k, eif3l and eif3m.

It is found in the cytoplasm. Its function is as follows. RNA-binding component of the eukaryotic translation initiation factor 3 (eIF-3) complex, which is involved in protein synthesis of a specialized repertoire of mRNAs and, together with other initiation factors, stimulates binding of mRNA and methionyl-tRNAi to the 40S ribosome. The eIF-3 complex specifically targets and initiates translation of a subset of mRNAs involved in cell proliferation. This subunit can bind 18S rRNA. This Danio rerio (Zebrafish) protein is Eukaryotic translation initiation factor 3 subunit G (eif3g).